Here is a 221-residue protein sequence, read N- to C-terminus: Uracil-DNA glycosylase (221 aa).

Asp-65 acts as the Proton acceptor in catalysis.

Belongs to the uracil-DNA glycosylase (UDG) superfamily. UNG family.

It is found in the cytoplasm. It carries out the reaction Hydrolyzes single-stranded DNA or mismatched double-stranded DNA and polynucleotides, releasing free uracil.. In terms of biological role, excises uracil residues from the DNA which can arise as a result of misincorporation of dUMP residues by DNA polymerase or due to deamination of cytosine. This Christiangramia forsetii (strain DSM 17595 / CGMCC 1.15422 / KT0803) (Gramella forsetii) protein is Uracil-DNA glycosylase.